Here is a 142-residue protein sequence, read N- to C-terminus: Peptidyl-prolyl cis-trans isomerase FKBP2 (142 aa).

The N-terminal stretch at 1–21 is a signal peptide; that stretch reads MRLSWFRVLTVLSICLSAVAT. One can recognise a PPIase FKBP-type domain in the interval 49–137; the sequence is GDVLHMHYTG…VFEVELLKIE (89 aa). The Prevents secretion from ER motif lies at 139 to 142; that stretch reads RTEL.

This sequence belongs to the FKBP-type PPIase family. FKBP2 subfamily. In terms of assembly, interacts with ARFGEF1/BIG1 and the C-terminal of EPB41L2. In terms of tissue distribution, T-cells and thymus.

Its subcellular location is the endoplasmic reticulum membrane. It catalyses the reaction [protein]-peptidylproline (omega=180) = [protein]-peptidylproline (omega=0). With respect to regulation, inhibited by both FK506 and rapamycin. PPIases accelerate the folding of proteins. It catalyzes the cis-trans isomerization of proline imidic peptide bonds in oligopeptides. The sequence is that of Peptidyl-prolyl cis-trans isomerase FKBP2 (FKBP2) from Homo sapiens (Human).